A 204-amino-acid chain; its full sequence is Leucyl/phenylalanyl-tRNA--protein transferase (204 aa).

It belongs to the L/F-transferase family.

It localises to the cytoplasm. The catalysed reaction is N-terminal L-lysyl-[protein] + L-leucyl-tRNA(Leu) = N-terminal L-leucyl-L-lysyl-[protein] + tRNA(Leu) + H(+). It catalyses the reaction N-terminal L-arginyl-[protein] + L-leucyl-tRNA(Leu) = N-terminal L-leucyl-L-arginyl-[protein] + tRNA(Leu) + H(+). The enzyme catalyses L-phenylalanyl-tRNA(Phe) + an N-terminal L-alpha-aminoacyl-[protein] = an N-terminal L-phenylalanyl-L-alpha-aminoacyl-[protein] + tRNA(Phe). Functionally, functions in the N-end rule pathway of protein degradation where it conjugates Leu, Phe and, less efficiently, Met from aminoacyl-tRNAs to the N-termini of proteins containing an N-terminal arginine or lysine. The chain is Leucyl/phenylalanyl-tRNA--protein transferase from Rhizobium etli (strain ATCC 51251 / DSM 11541 / JCM 21823 / NBRC 15573 / CFN 42).